An 89-amino-acid chain; its full sequence is MAAQIPESDQIKQFKEFLGTYNKLTETCFLDCVKDFTTREVKPEEVTCSEHCLQKYLKMTQRISVRFQEYHIQQNEALAAKAGLLGQPR.

The residue at position 2 (alanine 2) is an N-acetylalanine. The Twin CX3C motif motif lies at cysteine 28 to cysteine 52. 2 disulfides stabilise this stretch: cysteine 28–cysteine 52 and cysteine 32–cysteine 48.

This sequence belongs to the small Tim family. As to quaternary structure, heterohexamer; composed of 3 copies of TIMM9 and 3 copies of TIMM10/TIM10A, named soluble 70 kDa complex. The complex forms a 6-bladed alpha-propeller structure and associates with the TIMM22 component of the TIM22 complex. Interacts with multi-pass transmembrane proteins in transit. Also forms a complex composed of TIMM9, TIMM10/TIM10A and FXC1/TIM10B.

It is found in the mitochondrion inner membrane. Functionally, mitochondrial intermembrane chaperone that participates in the import and insertion of multi-pass transmembrane proteins into the mitochondrial inner membrane. May also be required for the transfer of beta-barrel precursors from the TOM complex to the sorting and assembly machinery (SAM complex) of the outer membrane. Acts as a chaperone-like protein that protects the hydrophobic precursors from aggregation and guide them through the mitochondrial intermembrane space. In Mus musculus (Mouse), this protein is Mitochondrial import inner membrane translocase subunit Tim9 (Timm9).